The following is a 93-amino-acid chain: Mitochondrial import inner membrane translocase subunit Tim10-A (93 aa).

Residues 32-57 (CHKKCVPPHYKEAELSKGESVCLDRC) carry the Twin CX3C motif motif. Intrachain disulfides connect cysteine 32/cysteine 57 and cysteine 36/cysteine 53.

The protein belongs to the small Tim family. In terms of assembly, heterohexamer; composed of 3 copies of TIMM9 and 3 copies of TIMM10/TIM10A, named soluble 70 kDa complex. The complex forms a 6-bladed alpha-propeller structure and associates with the TIMM22 component of the TIM22 complex. Interacts with multi-pass transmembrane proteins in transit.

Its subcellular location is the mitochondrion inner membrane. Functionally, mitochondrial intermembrane chaperone that participates in the import and insertion of multi-pass transmembrane proteins into the mitochondrial inner membrane. May also be required for the transfer of beta-barrel precursors from the TOM complex to the sorting and assembly machinery (SAM complex) of the outer membrane. Acts as a chaperone-like protein that protects the hydrophobic precursors from aggregation and guide them through the mitochondrial intermembrane space. The chain is Mitochondrial import inner membrane translocase subunit Tim10-A (timm10-a) from Xenopus laevis (African clawed frog).